The sequence spans 243 residues: Ribosomal RNA small subunit methyltransferase J (243 aa).

S-adenosyl-L-methionine-binding positions include 112–113 (ER) and aspartate 164.

It belongs to the methyltransferase superfamily. RsmJ family.

It localises to the cytoplasm. The enzyme catalyses guanosine(1516) in 16S rRNA + S-adenosyl-L-methionine = N(2)-methylguanosine(1516) in 16S rRNA + S-adenosyl-L-homocysteine + H(+). In terms of biological role, specifically methylates the guanosine in position 1516 of 16S rRNA. The sequence is that of Ribosomal RNA small subunit methyltransferase J from Legionella pneumophila (strain Paris).